The primary structure comprises 167 residues: Protein MIX23 (167 aa).

A disordered region spans residues 81 to 108 (QLDQDRNTSKSPLKSQQQLPSSSTTQVS). Low complexity predominate over residues 89–106 (SKSPLKSQQQLPSSSTTQ).

The protein belongs to the MIX23 family.

The polypeptide is Protein MIX23 (cid2) (Schizosaccharomyces pombe (strain 972 / ATCC 24843) (Fission yeast)).